The primary structure comprises 49 residues: Large ribosomal subunit protein eL40 (49 aa).

This sequence belongs to the eukaryotic ribosomal protein eL40 family.

The protein is Large ribosomal subunit protein eL40 of Methanopyrus kandleri (strain AV19 / DSM 6324 / JCM 9639 / NBRC 100938).